Consider the following 77-residue polypeptide: DNA-directed RNA polymerase subunit Rpo10 (77 aa).

The Zn(2+) site is built by C7, C10, C44, and C45.

It belongs to the archaeal Rpo10/eukaryotic RPB10 RNA polymerase subunit family. In terms of assembly, part of the RNA polymerase complex. Zn(2+) is required as a cofactor.

It localises to the cytoplasm. The enzyme catalyses RNA(n) + a ribonucleoside 5'-triphosphate = RNA(n+1) + diphosphate. Its function is as follows. DNA-dependent RNA polymerase (RNAP) catalyzes the transcription of DNA into RNA using the four ribonucleoside triphosphates as substrates. The polypeptide is DNA-directed RNA polymerase subunit Rpo10 (Aeropyrum pernix (strain ATCC 700893 / DSM 11879 / JCM 9820 / NBRC 100138 / K1)).